The primary structure comprises 218 residues: 3-dehydroquinate dehydratase (218 aa).

Residues 29 to 31 and Arg-56 contribute to the 3-dehydroquinate site; that span reads EFR. The active-site Proton donor/acceptor is His-116. Residue Lys-142 is the Schiff-base intermediate with substrate of the active site. 3-dehydroquinate contacts are provided by Arg-180, Ser-200, and Gln-204.

This sequence belongs to the type-I 3-dehydroquinase family. In terms of assembly, homodimer.

It carries out the reaction 3-dehydroquinate = 3-dehydroshikimate + H2O. It participates in metabolic intermediate biosynthesis; chorismate biosynthesis; chorismate from D-erythrose 4-phosphate and phosphoenolpyruvate: step 3/7. Involved in the third step of the chorismate pathway, which leads to the biosynthesis of aromatic amino acids. Catalyzes the cis-dehydration of 3-dehydroquinate (DHQ) and introduces the first double bond of the aromatic ring to yield 3-dehydroshikimate. This Methanococcus maripaludis (strain C6 / ATCC BAA-1332) protein is 3-dehydroquinate dehydratase.